A 179-amino-acid polypeptide reads, in one-letter code: Large ribosomal subunit protein uL6 (179 aa).

Belongs to the universal ribosomal protein uL6 family. In terms of assembly, part of the 50S ribosomal subunit.

In terms of biological role, this protein binds to the 23S rRNA, and is important in its secondary structure. It is located near the subunit interface in the base of the L7/L12 stalk, and near the tRNA binding site of the peptidyltransferase center. This Mycobacterium tuberculosis (strain ATCC 25618 / H37Rv) protein is Large ribosomal subunit protein uL6.